The chain runs to 515 residues: ATP synthase subunit alpha (515 aa).

171–178 is a binding site for ATP; that stretch reads GDRQTGKT.

It belongs to the ATPase alpha/beta chains family. In terms of assembly, F-type ATPases have 2 components, CF(1) - the catalytic core - and CF(0) - the membrane proton channel. CF(1) has five subunits: alpha(3), beta(3), gamma(1), delta(1), epsilon(1). CF(0) has three main subunits: a(1), b(2) and c(9-12). The alpha and beta chains form an alternating ring which encloses part of the gamma chain. CF(1) is attached to CF(0) by a central stalk formed by the gamma and epsilon chains, while a peripheral stalk is formed by the delta and b chains.

The protein resides in the cell inner membrane. The enzyme catalyses ATP + H2O + 4 H(+)(in) = ADP + phosphate + 5 H(+)(out). Its function is as follows. Produces ATP from ADP in the presence of a proton gradient across the membrane. The alpha chain is a regulatory subunit. The protein is ATP synthase subunit alpha of Xylella fastidiosa (strain M12).